The following is a 209-amino-acid chain: Probable nicotinate-nucleotide adenylyltransferase (209 aa).

Belongs to the NadD family.

It carries out the reaction nicotinate beta-D-ribonucleotide + ATP + H(+) = deamido-NAD(+) + diphosphate. It participates in cofactor biosynthesis; NAD(+) biosynthesis; deamido-NAD(+) from nicotinate D-ribonucleotide: step 1/1. Its function is as follows. Catalyzes the reversible adenylation of nicotinate mononucleotide (NaMN) to nicotinic acid adenine dinucleotide (NaAD). The sequence is that of Probable nicotinate-nucleotide adenylyltransferase from Streptococcus pneumoniae serotype 4 (strain ATCC BAA-334 / TIGR4).